Here is a 147-residue protein sequence, read N- to C-terminus: Cyanate hydratase (147 aa).

Catalysis depends on residues Arg-88, Glu-91, and Ser-114.

The protein belongs to the cyanase family.

The enzyme catalyses cyanate + hydrogencarbonate + 3 H(+) = NH4(+) + 2 CO2. Functionally, catalyzes the reaction of cyanate with bicarbonate to produce ammonia and carbon dioxide. The protein is Cyanate hydratase of Prochlorococcus marinus (strain NATL2A).